The primary structure comprises 255 residues: Postacrosomal sheath WW domain-binding protein (255 aa).

In terms of domain architecture, GRAM spans 15–87; the sequence is LIPNGESLLK…DLITNLTVEQ (73 aa). 7 consecutive repeat copies span residues 139–145, 146–152, 153–159, 160–166, 167–173, 174–180, and 202–208. The 6 X 7 AA tandem repeat of Y-G-X-P-P-X-G stretch occupies residues 139-208; the sequence is YGAPPAGYGA…PAGYGAPPLG (70 aa). Residues 171 to 174 carry the PPxY motif motif; it reads PPGY. Disordered stretches follow at residues 180-199 and 204-255; these read GYGA…RASP and APPL…ASSS.

Its function is as follows. May play a role in meiotic resumption and pronuclear formation, mediated by a WW domain-signaling pathway during fertilization. In Macaca fascicularis (Crab-eating macaque), this protein is Postacrosomal sheath WW domain-binding protein (WBP2NL).